Here is a 789-residue protein sequence, read N- to C-terminus: Ent-kaur-16-ene synthase, chloroplastic (789 aa).

Mg(2+) is bound by residues aspartate 536, aspartate 540, asparagine 680, serine 684, and glutamate 688. The short motif at 536-540 is the DDXXD motif element; sequence DDFYD.

It belongs to the terpene synthase family. It depends on Mg(2+) as a cofactor. The N-terminus is blocked. In terms of tissue distribution, abundant in most tissues. Present in low amounts in mature cotyledons.

It localises to the plastid. Its subcellular location is the chloroplast. The catalysed reaction is ent-copalyl diphosphate = ent-kaur-16-ene + diphosphate. Its pathway is plant hormone biosynthesis; gibberellin biosynthesis. Its function is as follows. Catalyzes the conversion of ent-copalyl diphosphate to the gibberellin precursor ent-kaur-16-ene. This Cucurbita maxima (Pumpkin) protein is Ent-kaur-16-ene synthase, chloroplastic.